The primary structure comprises 315 residues: Microtubule-associated protein Jupiter (315 aa).

The span at 1 to 14 shows a compositional bias: polar residues; sequence MISNFDCTDNQASS. Disordered regions lie at residues 1-37 and 51-89; these read MISNFDCTDNQASSKVLRPPGGGSSDIFGSEMPQTPR and EKDNGVKNNGDAPRRGQKTVDSHSRLFGEPTRPITPGKN. The residue at position 24 (S24) is a Phosphoserine. Position 35 is a phosphothreonine (T35). Residues 62–76 are compositionally biased toward basic and acidic residues; sequence APRRGQKTVDSHSRL. T81 and T85 each carry phosphothreonine. Phosphoserine is present on residues S94, S122, and S133. Disordered stretches follow at residues 116 to 166 and 272 to 315; these read YNGK…ADDA and EGNP…SGLW. Over residues 120–133 the composition is skewed to low complexity; the sequence is SGSVSSASSSVSSS. Polar residues-rich tracts occupy residues 134 to 148 and 285 to 296; these read TENLKMNSGSRSVFR and DFTQRQESSNGG.

Belongs to the MAP Jupiter family.

Its subcellular location is the nucleus. The protein resides in the cytoplasm. It localises to the cytoskeleton. It is found in the spindle. Functionally, binds to all microtubule populations. The protein is Microtubule-associated protein Jupiter of Drosophila sechellia (Fruit fly).